We begin with the raw amino-acid sequence, 284 residues long: Tropomyosin beta chain (284 aa).

Position 1 is an N-acetylmethionine (M1). A disordered region spans residues 1-65 (MDAIKKKMQM…EVEKYSESVK (65 aa)). Positions 1–284 (MDAIKKKMQM…DNALNDITSL (284 aa)) form a coiled coil. 2 stretches are compositionally biased toward basic and acidic residues: residues 12 to 40 (KLDK…KQLE) and 51 to 65 (KGTE…ESVK). A Phosphothreonine modification is found at T53. S61 is modified (phosphoserine; by PIK3CG). A Phosphothreonine modification is found at T79. S87 bears the Phosphoserine mark. The residue at position 108 (T108) is a Phosphothreonine. The disordered stretch occupies residues 117–136 (EKAADESERGMKVIENRAMK). Phosphoserine is present on residues S158, S206, and S215. A Phosphothreonine modification is found at T252. Y261 bears the Phosphotyrosine mark. Position 271 is a phosphoserine (S271). T282 bears the Phosphothreonine mark. S283 is subject to Phosphoserine.

This sequence belongs to the tropomyosin family. Homodimer. Heterodimer of an alpha (TPM1, TPM3 or TPM4) and a beta (TPM2) chain. Phosphorylated on Ser-61 by PIK3CG. Phosphorylation on Ser-61 is required for ADRB2 internalization. Present in primary breast cancer tissue, absent from normal breast tissue.

The protein resides in the cytoplasm. The protein localises to the cytoskeleton. Functionally, binds to actin filaments in muscle and non-muscle cells. Plays a central role, in association with the troponin complex, in the calcium dependent regulation of vertebrate striated muscle contraction. Smooth muscle contraction is regulated by interaction with caldesmon. In non-muscle cells is implicated in stabilizing cytoskeleton actin filaments. The non-muscle isoform may have a role in agonist-mediated receptor internalization. The protein is Tropomyosin beta chain (TPM2) of Homo sapiens (Human).